A 33-amino-acid chain; its full sequence is Cytochrome b6-f complex subunit 8 (33 aa).

The helical transmembrane segment at 2–22 (LFTLAWASLAAVFSFSIAMVV) threads the bilayer.

It belongs to the PetN family. The 4 large subunits of the cytochrome b6-f complex are cytochrome b6, subunit IV (17 kDa polypeptide, PetD), cytochrome f and the Rieske protein, while the 4 small subunits are PetG, PetL, PetM and PetN. The complex functions as a dimer.

Its subcellular location is the cellular thylakoid membrane. Its function is as follows. Component of the cytochrome b6-f complex, which mediates electron transfer between photosystem II (PSII) and photosystem I (PSI), cyclic electron flow around PSI, and state transitions. This chain is Cytochrome b6-f complex subunit 8, found in Synechococcus sp. (strain WH7803).